The following is a 113-amino-acid chain: Dolichyl-diphosphooligosaccharide--protein glycosyltransferase subunit DAD1 (113 aa).

Position 2 is an N-acetylserine (Ser2). At 2 to 30 (SASVVSVISRFLEEYLSSTPQRLKLLDAY) the chain is on the cytoplasmic side. A helical membrane pass occupies residues 31-51 (LLYILLTGALQFGYCLLVGTF). A topological domain (lumenal) is located at residue Pro52. A helical transmembrane segment spans residues 53–73 (FNSFLSGFISCVGSFILAVRL). The Cytoplasmic segment spans residues 74 to 92 (RIQINPQNKADFQGISPER). Residues 93–113 (AFADFLFASTILHLVVMNFVG) traverse the membrane as a helical segment.

It belongs to the DAD/OST2 family. Component of the oligosaccharyltransferase (OST) complex. OST exists in two different complex forms which contain common core subunits RPN1, RPN2, OST48, OST4, DAD1 and TMEM258, either STT3A or STT3B as catalytic subunits, and form-specific accessory subunits. STT3A complex assembly occurs through the formation of 3 subcomplexes. Subcomplex 1 contains RPN1 and TMEM258, subcomplex 2 contains the STT3A-specific subunits STT3A, DC2/OSTC, and KCP2 as well as the core subunit OST4, and subcomplex 3 contains RPN2, DAD1, and OST48. The STT3A complex can form stable complexes with the Sec61 complex or with both the Sec61 and TRAP complexes.

Its subcellular location is the endoplasmic reticulum membrane. Its pathway is protein modification; protein glycosylation. Its function is as follows. Subunit of the oligosaccharyl transferase (OST) complex that catalyzes the initial transfer of a defined glycan (Glc(3)Man(9)GlcNAc(2) in eukaryotes) from the lipid carrier dolichol-pyrophosphate to an asparagine residue within an Asn-X-Ser/Thr consensus motif in nascent polypeptide chains, the first step in protein N-glycosylation. N-glycosylation occurs cotranslationally and the complex associates with the Sec61 complex at the channel-forming translocon complex that mediates protein translocation across the endoplasmic reticulum (ER). All subunits are required for a maximal enzyme activity. This Pongo abelii (Sumatran orangutan) protein is Dolichyl-diphosphooligosaccharide--protein glycosyltransferase subunit DAD1.